The chain runs to 434 residues: Methylenetetrahydrofolate--tRNA-(uracil-5-)-methyltransferase TrmFO (434 aa).

FAD is bound at residue 10–15 (GAGLAG).

Belongs to the MnmG family. TrmFO subfamily. FAD serves as cofactor.

Its subcellular location is the cytoplasm. The catalysed reaction is uridine(54) in tRNA + (6R)-5,10-methylene-5,6,7,8-tetrahydrofolate + NADH + H(+) = 5-methyluridine(54) in tRNA + (6S)-5,6,7,8-tetrahydrofolate + NAD(+). The enzyme catalyses uridine(54) in tRNA + (6R)-5,10-methylene-5,6,7,8-tetrahydrofolate + NADPH + H(+) = 5-methyluridine(54) in tRNA + (6S)-5,6,7,8-tetrahydrofolate + NADP(+). In terms of biological role, catalyzes the folate-dependent formation of 5-methyl-uridine at position 54 (M-5-U54) in all tRNAs. This Bacillus cereus (strain ATCC 10987 / NRS 248) protein is Methylenetetrahydrofolate--tRNA-(uracil-5-)-methyltransferase TrmFO.